Here is a 136-residue protein sequence, read N- to C-terminus: Classical arabinogalactan protein 26 (136 aa).

Residues 1–21 (MSVSLFTAFTVLSLCLHTSTS) form the signal peptide. The disordered stretch occupies residues 38–95 (APSSFSASTPAMSPDTSPLFPTPGSSEMSPSPSESSIMPTIPSSLSPPNPDAVTPDPL). Residues 40–53 (SSFSASTPAMSPDT) show a composition bias toward polar residues. The span at 59–81 (TPGSSEMSPSPSESSIMPTIPSS) shows a compositional bias: low complexity. A lipid anchor (GPI-anchor amidated serine) is attached at Ser108. A propeptide spans 109–136 (SSVCLVSSQLSSLLLVLLMLLLAFCSFF) (removed in mature form).

This sequence belongs to the classical AGP family. In terms of processing, O-glycosylated on the hydroxyproline residues.

The protein resides in the cell membrane. Functionally, proteoglycan that seems to be implicated in diverse developmental roles such as differentiation, cell-cell recognition, embryogenesis and programmed cell death. This chain is Classical arabinogalactan protein 26 (AGP26), found in Arabidopsis thaliana (Mouse-ear cress).